Here is a 177-residue protein sequence, read N- to C-terminus: Large ribosomal subunit protein uL6 (177 aa).

Belongs to the universal ribosomal protein uL6 family. In terms of assembly, part of the 50S ribosomal subunit.

This protein binds to the 23S rRNA, and is important in its secondary structure. It is located near the subunit interface in the base of the L7/L12 stalk, and near the tRNA binding site of the peptidyltransferase center. The protein is Large ribosomal subunit protein uL6 of Edwardsiella ictaluri (strain 93-146).